Reading from the N-terminus, the 245-residue chain is 2,3-bisphosphoglycerate-dependent phosphoglycerate mutase (245 aa).

Substrate is bound by residues 8-15 (RHGQSLWN), 21-22 (TG), arginine 60, 87-90 (ERHY), lysine 98, 114-115 (RR), and 183-184 (GN). Residue histidine 9 is the Tele-phosphohistidine intermediate of the active site. Glutamate 87 acts as the Proton donor/acceptor in catalysis.

The protein belongs to the phosphoglycerate mutase family. BPG-dependent PGAM subfamily.

The catalysed reaction is (2R)-2-phosphoglycerate = (2R)-3-phosphoglycerate. It functions in the pathway carbohydrate degradation; glycolysis; pyruvate from D-glyceraldehyde 3-phosphate: step 3/5. Catalyzes the interconversion of 2-phosphoglycerate and 3-phosphoglycerate. This Bacillus cereus (strain ATCC 14579 / DSM 31 / CCUG 7414 / JCM 2152 / NBRC 15305 / NCIMB 9373 / NCTC 2599 / NRRL B-3711) protein is 2,3-bisphosphoglycerate-dependent phosphoglycerate mutase.